We begin with the raw amino-acid sequence, 65 residues long: INSICLLPKKQGFCRARFPRFYYNSSTRRCEMFYYGGCGGNANNFNTLEECEKVCLGYGEAWKAP.

In terms of domain architecture, BPTI/Kunitz inhibitor spans 5–55; the sequence is CLLPKKQGFCRARFPRFYYNSSTRRCEMFYYGGCGGNANNFNTLEECEKVC. 3 cysteine pairs are disulfide-bonded: C5–C55, C14–C38, and C30–C51.

It belongs to the venom Kunitz-type family. Sea anemone type 2 potassium channel toxin subfamily.

It is found in the secreted. The protein resides in the nematocyst. Its function is as follows. Dual-function toxin that inhibits both serine proteases (trypsin Kd=124 nM) and voltage-gated potassium channels rKv1.1/KCNA1 (IC(50)=0.9 nM). The activity on the Kv1.1/KCNA1 is selective and reversible. The toxin presumably acts by blocking the channel pore in the open state. The sequence is that of KappaPI-actitoxin-Ael3a from Anthopleura elegantissima (Green aggregating anemone).